Reading from the N-terminus, the 376-residue chain is Protein RecA (376 aa).

Position 66 to 73 (66 to 73) interacts with ATP; it reads GPESSGKT. A disordered region spans residues 329–376; sequence VGVKPEDLTAEPGADAAGAAADAEAPAKSVPAPAAKSAKGSKAAAAKS. The segment covering 338-376 has biased composition (low complexity); it reads AEPGADAAGAAADAEAPAKSVPAPAAKSAKGSKAAAAKS.

It belongs to the RecA family.

The protein resides in the cytoplasm. Its function is as follows. Can catalyze the hydrolysis of ATP in the presence of single-stranded DNA, the ATP-dependent uptake of single-stranded DNA by duplex DNA, and the ATP-dependent hybridization of homologous single-stranded DNAs. It interacts with LexA causing its activation and leading to its autocatalytic cleavage. The protein is Protein RecA of Streptomyces rimosus.